A 264-amino-acid polypeptide reads, in one-letter code: Thymidylate synthase (264 aa).

Residue Arg-21 coordinates dUMP. His-51 contacts (6R)-5,10-methylene-5,6,7,8-tetrahydrofolate. A dUMP-binding site is contributed by 126-127; sequence RR. The Nucleophile role is filled by Cys-146. DUMP contacts are provided by residues 166-169, Asn-177, and 207-209; these read RSAD and HLY. Asp-169 contributes to the (6R)-5,10-methylene-5,6,7,8-tetrahydrofolate binding site. Ser-263 contacts (6R)-5,10-methylene-5,6,7,8-tetrahydrofolate.

The protein belongs to the thymidylate synthase family. Bacterial-type ThyA subfamily. Homodimer.

The protein localises to the cytoplasm. The catalysed reaction is dUMP + (6R)-5,10-methylene-5,6,7,8-tetrahydrofolate = 7,8-dihydrofolate + dTMP. It functions in the pathway pyrimidine metabolism; dTTP biosynthesis. Its function is as follows. Catalyzes the reductive methylation of 2'-deoxyuridine-5'-monophosphate (dUMP) to 2'-deoxythymidine-5'-monophosphate (dTMP) while utilizing 5,10-methylenetetrahydrofolate (mTHF) as the methyl donor and reductant in the reaction, yielding dihydrofolate (DHF) as a by-product. This enzymatic reaction provides an intracellular de novo source of dTMP, an essential precursor for DNA biosynthesis. The polypeptide is Thymidylate synthase (Shouchella clausii (strain KSM-K16) (Alkalihalobacillus clausii)).